Reading from the N-terminus, the 396-residue chain is Protein PIN-LIKES 5 (396 aa).

Topologically, residues 1 to 5 (MGFWS) are lumenal. The helical transmembrane segment at 6 to 26 (LLEVASMPVIQVLFMSLVGAF) threads the bilayer. The Cytoplasmic portion of the chain corresponds to 27-45 (MASDRCKLFPVEARNSMNK). A helical transmembrane segment spans residues 46–66 (VVFVLFAPALMFANLAQTVTL). Residues 67–73 (EDIISWW) are Lumenal-facing. Residues 74–94 (FMPVNMGLTFLIGGLLGWLVV) form a helical membrane-spanning segment. Over 95–106 (KILKPPPYLEGL) the chain is Cytoplasmic. Residues 107 to 127 (IVATCSAGNMGNLPIILVPAI) traverse the membrane as a helical segment. The Lumenal portion of the chain corresponds to 128-144 (CDEDKSPFGNRSVCRTV). Residues 145 to 165 (GLSYASFSMALGGFYIWTYTF) form a helical membrane-spanning segment. The Cytoplasmic segment spans residues 166–229 (RLIKGSAMKV…WRKGVDFLHE (64 aa)). Residues 230–250 (ILEELLAPPTLGAIIGFIFGA) traverse the membrane as a helical segment. Over 251–273 (VRWLRNLIIGDDAPLRIVQSTAK) the chain is Lumenal. A helical transmembrane segment spans residues 274 to 294 (LLGDGTIPCMTIILGGNLIQG). At 295 to 312 (LRSSAVKPMVVLGIVCVR) the chain is on the cytoplasmic side. A helical transmembrane segment spans residues 313–333 (YIAMPIIGIGIVLTAANLGFL). Over 334–337 (PADP) the chain is Lumenal. Residues 338–358 (LFQYVLMLQFTLPPAMNIGTM) form a helical membrane-spanning segment. Residues 359-370 (TQLYNVAQDECS) are Cytoplasmic-facing. A helical transmembrane segment spans residues 371-391 (VLMLWTYLVAILALTVWSTIF). Residues 392-396 (LHLLV) are Lumenal-facing.

It belongs to the auxin efflux carrier (TC 2.A.69.2) family. Expressed in seedlings, cauline leaves and flowers.

Its subcellular location is the endoplasmic reticulum membrane. Involved in cellular auxin homeostasis by regulating auxin metabolism. Regulates intracellular auxin accumulation at the endoplasmic reticulum and thus auxin availability for nuclear auxin signaling. In Arabidopsis thaliana (Mouse-ear cress), this protein is Protein PIN-LIKES 5.